The sequence spans 371 residues: Cytochrome b (371 aa).

4 helical membrane-spanning segments follow: residues 32–52, 76–98, 113–133, and 179–199; these read VGFS…CLAW, FVIR…VHIF, VWAV…IGYV, and LHVL…MHLF. Positions 82 and 96 each coordinate heme b. The heme b site is built by His183 and His197. His202 contributes to the a ubiquinone binding site. Helical transmembrane passes span 227 to 247, 296 to 316, 329 to 349, and 350 to 370; these read FYLR…YFIF, LMVI…LWFV, LILF…ILAY, and PIWM…VCRL.

It belongs to the cytochrome b family. The main subunits of complex b-c1 are: cytochrome b, cytochrome c1 and the Rieske protein. Heme b is required as a cofactor.

It localises to the mitochondrion inner membrane. Its function is as follows. Component of the ubiquinol-cytochrome c reductase complex (complex III or cytochrome b-c1 complex) that is part of the mitochondrial respiratory chain. The b-c1 complex mediates electron transfer from ubiquinol to cytochrome c. Contributes to the generation of a proton gradient across the mitochondrial membrane that is then used for ATP synthesis. The chain is Cytochrome b (MT-CYB) from Leishmania tarentolae (Sauroleishmania tarentolae).